Reading from the N-terminus, the 325-residue chain is Putative metal ion transporter ZIPCO (325 aa).

3 helical membrane-spanning segments follow: residues 5 to 25 (TFLALLIFVECVIVVYIPAYI), 46 to 66 (IASGAILALAFLHMLPEVIIL), and 74 to 94 (LYYIFILVLVSVTFLNITDIL). 2 N-linked (GlcNAc...) asparagine glycosylation sites follow: N106 and N160. 4 helical membrane-spanning segments follow: residues 179-199 (FFIVLSLFIHSFIEGLLMGSL), 239-259 (IYAWSFILSLPLGVFIAIFSF), 264-284 (FVEIIFSSIACGFFLYLSFNM), and 296-316 (HFISFSYFLGVGGMSTLMILF).

It localises to the cytoplasmic vesicle membrane. Putative transporter for the divalent zinc and iron cations. The chain is Putative metal ion transporter ZIPCO from Plasmodium falciparum (isolate 3D7).